The primary structure comprises 470 residues: Argininosuccinate lyase (470 aa).

It belongs to the lyase 1 family. Argininosuccinate lyase subfamily.

Its subcellular location is the cytoplasm. It carries out the reaction 2-(N(omega)-L-arginino)succinate = fumarate + L-arginine. Its pathway is amino-acid biosynthesis; L-arginine biosynthesis; L-arginine from L-ornithine and carbamoyl phosphate: step 3/3. The protein is Argininosuccinate lyase of Cupriavidus pinatubonensis (strain JMP 134 / LMG 1197) (Cupriavidus necator (strain JMP 134)).